A 481-amino-acid chain; its full sequence is 3-ketoacyl-CoA synthase 8 (481 aa).

2 helical membrane passes run 4–24 (LKMV…AMKG) and 44–64 (LQTI…YMLT). In terms of domain architecture, FAE spans 61-358 (YMLTRPKPVY…FFITFVKKKY (298 aa)). Catalysis depends on residues Cys213, His292, His376, His380, His409, and Asn413.

The protein belongs to the thiolase-like superfamily. Chalcone/stilbene synthases family. Expressed in leaves and seedlings.

The protein localises to the endoplasmic reticulum membrane. The enzyme catalyses a very-long-chain acyl-CoA + malonyl-CoA + H(+) = a very-long-chain 3-oxoacyl-CoA + CO2 + CoA. Its pathway is lipid metabolism; fatty acid biosynthesis. The protein is 3-ketoacyl-CoA synthase 8 of Arabidopsis thaliana (Mouse-ear cress).